An 88-amino-acid chain; its full sequence is uncharacterized protein (88 aa).

This is an uncharacterized protein from Escherichia coli (strain K12).